Consider the following 344-residue polypeptide: GTPase Obg (344 aa).

One can recognise an Obg domain in the interval 1–159; it reads MKFLDLAKVY…RTIWLRLKLI (159 aa). One can recognise an OBG-type G domain in the interval 160 to 327; the sequence is ADVGLLGLPN…VLRALRARID (168 aa). GTP contacts are provided by residues 166-173, 191-195, 212-215, 279-282, and 308-310; these read GLPNAGKS, FTTLH, DIPG, NKID, and SGA. Residues Ser173 and Thr193 each contribute to the Mg(2+) site.

The protein belongs to the TRAFAC class OBG-HflX-like GTPase superfamily. OBG GTPase family. In terms of assembly, monomer. Mg(2+) serves as cofactor.

The protein resides in the cytoplasm. In terms of biological role, an essential GTPase which binds GTP, GDP and possibly (p)ppGpp with moderate affinity, with high nucleotide exchange rates and a fairly low GTP hydrolysis rate. Plays a role in control of the cell cycle, stress response, ribosome biogenesis and in those bacteria that undergo differentiation, in morphogenesis control. This Ruegeria pomeroyi (strain ATCC 700808 / DSM 15171 / DSS-3) (Silicibacter pomeroyi) protein is GTPase Obg.